The following is a 325-amino-acid chain: Heat-inducible transcription repressor HrcA (325 aa).

This sequence belongs to the HrcA family.

Its function is as follows. Negative regulator of class I heat shock genes (grpE-dnaK-dnaJ and groELS operons). Prevents heat-shock induction of these operons. The chain is Heat-inducible transcription repressor HrcA from Staphylococcus haemolyticus (strain JCSC1435).